Consider the following 203-residue polypeptide: UPF0637 protein MCCL_0722 (203 aa).

Belongs to the UPF0637 family.

The polypeptide is UPF0637 protein MCCL_0722 (Macrococcus caseolyticus (strain JCSC5402) (Macrococcoides caseolyticum)).